Consider the following 95-residue polypeptide: MKDPRDIIKRPIITENTMNLIGQKKYTFEVDVKANKTEVKDAVEKIFGVKVAKVNIMNYKGKFKRVGRYSGYTNRRRKAIVTLTPDSKEIELFEV.

This sequence belongs to the universal ribosomal protein uL23 family. As to quaternary structure, part of the 50S ribosomal subunit. Contacts protein L29, and trigger factor when it is bound to the ribosome.

Functionally, one of the early assembly proteins it binds 23S rRNA. One of the proteins that surrounds the polypeptide exit tunnel on the outside of the ribosome. Forms the main docking site for trigger factor binding to the ribosome. The protein is Large ribosomal subunit protein uL23 of Geobacillus kaustophilus (strain HTA426).